Consider the following 310-residue polypeptide: Glutaminase (310 aa).

Residues S66, N117, E161, N168, Y192, Y244, and V262 each contribute to the substrate site. K294 is subject to N6-acetyllysine.

The protein belongs to the glutaminase family. As to quaternary structure, homotetramer.

The catalysed reaction is L-glutamine + H2O = L-glutamate + NH4(+). This chain is Glutaminase, found in Escherichia coli O81 (strain ED1a).